The primary structure comprises 207 residues: NADH-quinone oxidoreductase subunit A (207 aa).

The next 3 membrane-spanning stretches (helical) occupy residues 6–26, 62–82, and 87–107; these read LSAI…LVVP, LVAI…AYAV, and AGWL…IGLV.

This sequence belongs to the complex I subunit 3 family. In terms of assembly, NDH-1 is composed of 14 different subunits. Subunits NuoA, H, J, K, L, M, N constitute the membrane sector of the complex.

It is found in the cell inner membrane. The catalysed reaction is a quinone + NADH + 5 H(+)(in) = a quinol + NAD(+) + 4 H(+)(out). Its function is as follows. NDH-1 shuttles electrons from NADH, via FMN and iron-sulfur (Fe-S) centers, to quinones in the respiratory chain. The immediate electron acceptor for the enzyme in this species is believed to be ubiquinone. Couples the redox reaction to proton translocation (for every two electrons transferred, four hydrogen ions are translocated across the cytoplasmic membrane), and thus conserves the redox energy in a proton gradient. This is NADH-quinone oxidoreductase subunit A from Psychrobacter cryohalolentis (strain ATCC BAA-1226 / DSM 17306 / VKM B-2378 / K5).